Reading from the N-terminus, the 221-residue chain is 7-cyano-7-deazaguanine synthase (221 aa).

9 to 19 (YSGGMDSFTLL) is an ATP binding site. Positions 185, 193, 196, and 199 each coordinate Zn(2+).

This sequence belongs to the QueC family. Requires Zn(2+) as cofactor.

It catalyses the reaction 7-carboxy-7-deazaguanine + NH4(+) + ATP = 7-cyano-7-deazaguanine + ADP + phosphate + H2O + H(+). It functions in the pathway purine metabolism; 7-cyano-7-deazaguanine biosynthesis. Its function is as follows. Catalyzes the ATP-dependent conversion of 7-carboxy-7-deazaguanine (CDG) to 7-cyano-7-deazaguanine (preQ(0)). This Marinobacter nauticus (strain ATCC 700491 / DSM 11845 / VT8) (Marinobacter aquaeolei) protein is 7-cyano-7-deazaguanine synthase.